A 455-amino-acid polypeptide reads, in one-letter code: GTPase Der (455 aa).

EngA-type G domains follow at residues proline 4–aspartate 169 and isoleucine 178–arginine 353. GTP contacts are provided by residues glycine 10–serine 17, aspartate 57–leucine 61, asparagine 120–glutamate 123, glycine 184–serine 191, aspartate 231–isoleucine 235, and asparagine 296–aspartate 299. Residues arginine 354–glutamine 439 enclose the KH-like domain.

The protein belongs to the TRAFAC class TrmE-Era-EngA-EngB-Septin-like GTPase superfamily. EngA (Der) GTPase family. As to quaternary structure, associates with the 50S ribosomal subunit.

GTPase that plays an essential role in the late steps of ribosome biogenesis. The sequence is that of GTPase Der from Parasynechococcus marenigrum (strain WH8102).